Consider the following 334-residue polypeptide: Trans-1,2-dihydrobenzene-1,2-diol dehydrogenase (334 aa).

This sequence belongs to the Gfo/Idh/MocA family. In terms of assembly, homodimer.

The catalysed reaction is (1R,2R)-1,2-dihydrobenzene-1,2-diol + NADP(+) = catechol + NADPH + H(+). The enzyme catalyses D-xylose + NADP(+) = D-xylono-1,5-lactone + NADPH + H(+). The protein is Trans-1,2-dihydrobenzene-1,2-diol dehydrogenase (dhdh) of Danio rerio (Zebrafish).